A 435-amino-acid polypeptide reads, in one-letter code: Trigger factor (435 aa).

One can recognise a PPIase FKBP-type domain in the interval 163 to 248 (GDTVTIDFDG…IHEIKTKELP (86 aa)).

Belongs to the FKBP-type PPIase family. Tig subfamily.

The protein resides in the cytoplasm. The enzyme catalyses [protein]-peptidylproline (omega=180) = [protein]-peptidylproline (omega=0). Its function is as follows. Involved in protein export. Acts as a chaperone by maintaining the newly synthesized protein in an open conformation. Functions as a peptidyl-prolyl cis-trans isomerase. The polypeptide is Trigger factor (Pediococcus pentosaceus (strain ATCC 25745 / CCUG 21536 / LMG 10740 / 183-1w)).